The chain runs to 318 residues: Myoblast determination protein 1 (318 aa).

Residue Met1 forms a Peptide (Met-Gly) (interchain with G-Cter in ubiquitin) linkage. Position 104 is an N6-methyllysine; by EHMT2 (Lys104). The 52-residue stretch at 109–160 (DRRKAATMRERRRLSKVNEAFETLKRCTSSNPNQRLPKVEILRNAIRYIEGL) folds into the bHLH domain. 2 disordered regions span residues 175–225 (AAFY…QNGY) and 265–318 (APAL…YQVL). Polar residues predominate over residues 196–206 (SDASSPRSNCS). A compositionally biased stretch (low complexity) spans 265-274 (APALLLADAP). Composition is skewed to polar residues over residues 287–298 (LSDTEQGTQTPS) and 307–318 (AGSNPNAIYQVL).

As to quaternary structure, interacts with SUV39H1. Efficient DNA binding requires dimerization with another bHLH protein. Seems to form active heterodimers with ITF-2. Interacts with DDX5. Interacts with CHD2. Interacts with TSC22D3 isoform 1 and isoform 4. Interacts with SETD3. Interacts with P-TEFB complex; promotes the transcriptional activity of MYOD1 through its CDK9-mediated phosphorylation. Interacts with CSRP3. Interacts with NUPR1. In terms of processing, acetylated by a complex containing EP300 and PCAF. The acetylation is essential to activate target genes. Conversely, its deacetylation by SIRT1 inhibits its function. Ubiquitinated on the N-terminus; which is required for proteasomal degradation. Post-translationally, phosphorylated by CDK9. This phosphorylation promotes its function in muscle differentiation. In terms of processing, methylation at Lys-104 by EHMT2/G9a inhibits myogenic activity.

It is found in the nucleus. Its function is as follows. Acts as a transcriptional activator that promotes transcription of muscle-specific target genes and plays a role in muscle differentiation. Together with MYF5 and MYOG, co-occupies muscle-specific gene promoter core region during myogenesis. Induces fibroblasts to differentiate into myoblasts. Interacts with and is inhibited by the twist protein. This interaction probably involves the basic domains of both proteins. The chain is Myoblast determination protein 1 (Myod1) from Mus musculus (Mouse).